The chain runs to 158 residues: Cyclic pyranopterin monophosphate synthase (158 aa).

Substrate contacts are provided by residues 75–77 and 113–114; these read LCH and ME. Residue Asp128 is part of the active site.

This sequence belongs to the MoaC family. In terms of assembly, homohexamer; trimer of dimers.

The catalysed reaction is (8S)-3',8-cyclo-7,8-dihydroguanosine 5'-triphosphate = cyclic pyranopterin phosphate + diphosphate. The protein operates within cofactor biosynthesis; molybdopterin biosynthesis. Functionally, catalyzes the conversion of (8S)-3',8-cyclo-7,8-dihydroguanosine 5'-triphosphate to cyclic pyranopterin monophosphate (cPMP). This chain is Cyclic pyranopterin monophosphate synthase, found in Paraburkholderia xenovorans (strain LB400).